A 388-amino-acid chain; its full sequence is MINYPLASSTWDDLEYKAIQSVLDSKMFTMGEYVKQYETQFAKTFGSKYAVMVSSGSTANLLMIAALFFTKKPRLKKGDEIIVPAVSWSTTYYPLQQYGLRVKFVDIDINTLNIDIESLKEAVTDSTKAILTVNLLGNPNNFDEINKIIGGRDIILLEDNCESMGATFNNKCAGTFGLMGTFSSFYSHHIATMEGGCIVTDDEEIYHILLCIRAHGWTRNLPKKNKVTGVKSDDQFEESFKFVLPGYNVRPLEMSGAIGIEQLKKLPRFISVRRKNAEYFLDKFKDHPYLDVQQETGESSWFGFSFIIKKDSGVIRKQLVENLNSAGIECRPIVTGNFLKNTDVLKYFDYTVHNNVDNAEYLDKNGLFVGNHQIELFDEIDYLREVLK.

26–29 (KMFT) serves as a coordination point for GDP-4-dehydro-alpha-D-rhamnose. The helical transmembrane segment at 49 to 69 (YAVMVSSGSTANLLMIAALFF) threads the bilayer. Residues 56–57 (GS), Trp-88, Glu-162, and Ser-183 each bind pyridoxal 5'-phosphate. The Proton donor/acceptor role is filled by His-188. Position 215 (His-215) interacts with L-glutamate. Arg-219 lines the GDP-4-dehydro-alpha-D-rhamnose pocket. Asn-248 is a binding site for pyridoxal 5'-phosphate. Arg-250 serves as a coordination point for L-glutamate. Position 329 (Glu-329) interacts with GDP-4-dehydro-alpha-D-rhamnose.

The protein belongs to the DegT/DnrJ/EryC1 family. Homodimer. Pyridoxal 5'-phosphate serves as cofactor.

It is found in the cell membrane. It carries out the reaction GDP-4-dehydro-alpha-D-rhamnose + L-glutamate = GDP-4-dehydro-3,6-dideoxy-alpha-D-mannose + 2-oxoglutarate + NH4(+). It functions in the pathway nucleotide-sugar metabolism; GDP-L-colitose biosynthesis. Functionally, involved in the biosynthesis of L-colitose, a 3,6-dideoxyhexose present in the O-antigen region of lipopolysaccharides (LPS), where it serves as an antigenic determinant and is vital for bacterial defense and survival. Catalyzes the removal of the C3'-hydroxyl group from GDP-4-keto-6-deoxy-D-mannose via a combined transamination-deoxygenation reaction. The catalysis is initiated by a transamination step in which pyridoxal 5'-phosphate (PLP) is converted to pyridoxamine 5'-phosphate (PMP) in the presence of L-glutamate. This coenzyme then forms a Schiff base with GDP-4-keto-6-deoxy-D-mannose and the resulting adduct undergoes a PMP-mediated beta-dehydration reaction to give a sugar enamine intermediate, which after tautomerization and hydrolysis to release ammonia yields GDP-4-keto-3,6-dideoxy-D-mannose as a product. In vitro, is able to catalyze the formation of GDP-4-keto-3,6-dideoxymannose using GDP-perosamine rather than GDP-4-keto-6-deoxymannose as a substrate, with no need of glutamate. In Escherichia coli O55:H7 (strain CB9615 / EPEC), this protein is GDP-4-keto-6-deoxy-D-mannose 3-dehydratase.